The sequence spans 720 residues: ATP-dependent DNA helicase Hel308 (720 aa).

Residues Ser-23, Gln-28, and 46–53 each bind ATP; that span reads IPTASGKT. In terms of domain architecture, Helicase ATP-binding spans 33–197; that stretch reads KSGILEGKNA…WLNAELIVSD (165 aa). Residues 145-148 carry the DEAH box motif; that stretch reads DEIH. One can recognise a Helicase C-terminal domain in the interval 229–422; sequence LVYDAIRKKK…NLRSQVLALI (194 aa).

It belongs to the helicase family. Hel308 subfamily. Monomer. Interacts with PCNA. Requires Mg(2+) as cofactor. It depends on Zn(2+) as a cofactor.

The catalysed reaction is Couples ATP hydrolysis with the unwinding of duplex DNA by translocating in the 3'-5' direction.. It carries out the reaction ATP + H2O = ADP + phosphate + H(+). In terms of biological role, DNA-dependent ATPase and 3'-5' DNA helicase that may be involved in repair of stalled replication forks. Unwinds the lagging strand from forked DNA structures in a 3'-5' direction. PCNA, the DNA polymerase sliding clamp subunit, stimulates the helicase activity, and may alter substrate specificity. Unwinds branched DNA (Holliday junctions) in an ATP-dependent fashion; ss- and dsDNA stimulate ATPase to the greatest extent, although it preferentially binds DNA with a single-stranded region. Processes a RecA-mediated recombination intermediate between gapped circular and homologous linear dsDNA. The sequence is that of ATP-dependent DNA helicase Hel308 from Pyrococcus furiosus (strain ATCC 43587 / DSM 3638 / JCM 8422 / Vc1).